Reading from the N-terminus, the 300-residue chain is GTPase Era (300 aa).

Residues 4–172 (KSGFVALIGR…LEKIKKLLPE (169 aa)) enclose the Era-type G domain. Residues 12–19 (GRPNVGKS) are G1. 12 to 19 (GRPNVGKS) serves as a coordination point for GTP. Residues 38–42 (QTTRN) are G2. A G3 region spans residues 59-62 (DTPG). GTP is bound by residues 59–63 (DTPGV) and 122–125 (NKAD). The G4 stretch occupies residues 122–125 (NKAD). A G5 region spans residues 151 to 153 (IAA). Residues 195–281 (IREKILLNLS…NLQLWVKVKK (87 aa)) form the KH type-2 domain.

This sequence belongs to the TRAFAC class TrmE-Era-EngA-EngB-Septin-like GTPase superfamily. Era GTPase family. Monomer.

The protein localises to the cytoplasm. The protein resides in the cell membrane. An essential GTPase that binds both GDP and GTP, with rapid nucleotide exchange. Plays a role in 16S rRNA processing and 30S ribosomal subunit biogenesis and possibly also in cell cycle regulation and energy metabolism. This is GTPase Era from Caldicellulosiruptor saccharolyticus (strain ATCC 43494 / DSM 8903 / Tp8T 6331).